A 98-amino-acid chain; its full sequence is Ribonuclease P protein component 4 (98 aa).

Cys62, Cys65, Cys85, and Cys88 together coordinate Zn(2+).

This sequence belongs to the eukaryotic/archaeal RNase P protein component 4 family. In terms of assembly, consists of a catalytic RNA component and at least 4-5 protein subunits. The cofactor is Zn(2+).

It is found in the cytoplasm. It catalyses the reaction Endonucleolytic cleavage of RNA, removing 5'-extranucleotides from tRNA precursor.. In terms of biological role, part of ribonuclease P, a protein complex that generates mature tRNA molecules by cleaving their 5'-ends. This chain is Ribonuclease P protein component 4, found in Thermoplasma volcanium (strain ATCC 51530 / DSM 4299 / JCM 9571 / NBRC 15438 / GSS1).